The primary structure comprises 498 residues: Lysine--tRNA ligase (498 aa).

The Mg(2+) site is built by Glu-411 and Glu-418.

Belongs to the class-II aminoacyl-tRNA synthetase family. Homodimer. It depends on Mg(2+) as a cofactor.

It localises to the cytoplasm. It catalyses the reaction tRNA(Lys) + L-lysine + ATP = L-lysyl-tRNA(Lys) + AMP + diphosphate. In Enterococcus faecalis (strain ATCC 700802 / V583), this protein is Lysine--tRNA ligase.